A 72-amino-acid chain; its full sequence is Heat shock factor-binding protein 1-like protein 1 (72 aa).

The stretch at 12 to 62 forms a coiled coil; that stretch reads DLLQNAAENLLLEVEEHFQALTTTLNLRMEEMGSRIEDLQRNVDDLMTQAG.

It belongs to the HSBP1 family.

This chain is Heat shock factor-binding protein 1-like protein 1 (Hsbp1l1), found in Mus musculus (Mouse).